A 630-amino-acid chain; its full sequence is 1-deoxy-D-xylulose-5-phosphate synthase (630 aa).

Thiamine diphosphate contacts are provided by residues histidine 72 and 113 to 115 (GHS). A Mg(2+)-binding site is contributed by aspartate 144. Thiamine diphosphate is bound by residues 145-146 (GA), asparagine 173, tyrosine 284, and glutamate 367. Asparagine 173 provides a ligand contact to Mg(2+).

This sequence belongs to the transketolase family. DXPS subfamily. In terms of assembly, homodimer. It depends on Mg(2+) as a cofactor. The cofactor is thiamine diphosphate.

It carries out the reaction D-glyceraldehyde 3-phosphate + pyruvate + H(+) = 1-deoxy-D-xylulose 5-phosphate + CO2. The protein operates within metabolic intermediate biosynthesis; 1-deoxy-D-xylulose 5-phosphate biosynthesis; 1-deoxy-D-xylulose 5-phosphate from D-glyceraldehyde 3-phosphate and pyruvate: step 1/1. In terms of biological role, catalyzes the acyloin condensation reaction between C atoms 2 and 3 of pyruvate and glyceraldehyde 3-phosphate to yield 1-deoxy-D-xylulose-5-phosphate (DXP). The chain is 1-deoxy-D-xylulose-5-phosphate synthase from Bacillus cereus (strain AH187).